The following is a 1006-amino-acid chain: Cytosolic carboxypeptidase 3 (1006 aa).

The Peptidase M14 domain occupies 304-576; sequence YPYTYSNLQE…HFCDSLLDYC (273 aa). Residues histidine 368, glutamate 371, and histidine 464 each coordinate Zn(2+). Glutamate 540 acts as the Proton donor/acceptor in catalysis. The tract at residues 790 to 810 is disordered; sequence ESHHQLKSKAKRCSSFQSKRT.

It belongs to the peptidase M14 family. Zn(2+) is required as a cofactor. Widely expressed. Expressed abundantly in tissues with m otile cilia such as testis, lung and trachea. Abundantly expressed in pituitary and kidney, moderately expressed in brain, eye, fat, pancreas, stomach, and adrenal.

It is found in the cytoplasm. The protein resides in the cytosol. It catalyses the reaction (L-glutamyl)(n+1)-gamma-L-glutamyl-L-glutamyl-[protein] + H2O = (L-glutamyl)(n)-gamma-L-glutamyl-L-glutamyl-[protein] + L-glutamate. Its function is as follows. Metallocarboxypeptidase that mediates deglutamylation of tubulin and non-tubulin target proteins. Catalyzes the removal of polyglutamate side chains present on the gamma-carboxyl group of glutamate residues within the C-terminal tail of tubulin protein. Specifically cleaves tubulin long-side-chains, while it is not able to remove the branching point glutamate. Also catalyzes the removal of polyglutamate residues from the carboxy-terminus of non-tubulin proteins such as MYLK. May catalyze the hydrolysis of aspartate from the carboxy-terminus of target proteins. Does not show detyrosinase or deglycylase activities from the carboxy-terminus of target proteins. The sequence is that of Cytosolic carboxypeptidase 3 from Mus musculus (Mouse).